Reading from the N-terminus, the 1474-residue chain is SH3 and multiple ankyrin repeat domains protein 2 (1474 aa).

The span at 66–76 (LSPQLLQQTPS) shows a compositional bias: polar residues. The disordered stretch occupies residues 66-125 (LSPQLLQQTPSKPDGATKSLGSYAPGPRSRSPSLNRLGGAGEDGKRPQPPHWHVGSPFTP). One can recognise an SH3 domain in the interval 148 to 207 (VPGRLFVAIKPYQPQVDGEIPLHRGDRVKVLSIGEGGFWEGSARGHIGWFPAECVEEVQC). The residue at position 162 (Gln-162) is a Phosphoserine. The PDZ domain maps to 248-342 (TVVLQKKDNE…HLVLKVVTVT (95 aa)). At Ser-373 the chain carries Phosphoserine. Residues 392-413 (RKKKDKPEEIVPASKPSRTAEN) form a disordered region. Ser-457 carries the post-translational modification Phosphoserine. Thr-486 bears the Phosphothreonine mark. The interval 504 to 534 (LSMPDTSEDIPPPPQSVPPSPPPPSPTTYNC) is disordered. The segment covering 513–529 (IPPPPQSVPPSPPPPSP) has biased composition (pro residues). Position 586 is a phosphoserine (Ser-586). 3 disordered regions span residues 659–920 (TIIV…ADDK), 947–995 (PVAG…PAAA), and 1057–1153 (PALA…ESMD). A compositionally biased stretch (low complexity) spans 666–678 (STSSSGKSSQGSS). Residues 711-722 (VRDREKRLEARR) are compositionally biased toward basic and acidic residues. Ser-724 is subject to Phosphoserine. Over residues 783–795 (LGGGEAGAQGEAG) the composition is skewed to gly residues. 2 stretches are compositionally biased toward low complexity: residues 811–823 (PAAA…PASP) and 833–846 (RLLD…LALS). Basic and acidic residues-rich tracts occupy residues 847 to 868 (ARDR…KADL) and 899 to 920 (RRQE…ADDK). Residue Thr-903 is modified to Phosphothreonine. Over residues 1075–1085 (SLNSSQPANST) the composition is skewed to polar residues. Over residues 1119-1130 (VDSRSSSDHHLE) the composition is skewed to basic and acidic residues. Residues 1131-1151 (TTSTISTVSSISTLSSEGGES) show a composition bias toward low complexity. An SH3-binding motif is present at residues 1169 to 1175 (PPVPPKP). Disordered regions lie at residues 1195 to 1216 (EDTD…SAQA) and 1260 to 1401 (NRGK…ISNK). The segment covering 1202–1212 (IPPPAPPPPPG) has biased composition (pro residues). The span at 1291–1305 (STVSGTRSTTVTFTV) shows a compositional bias: low complexity. The O-linked (GlcNAc) threonine glycan is linked to Thr-1292. Residues 1307–1317 (PGTSQPITLQS) are compositionally biased toward polar residues. 2 positions are modified to phosphoserine: Ser-1334 and Ser-1338. 2 stretches are compositionally biased toward low complexity: residues 1352–1363 (SAAAASPSPTLS) and 1385–1399 (RSRS…QPIS). One can recognise an SAM domain in the interval 1411–1474 (WTKPDVADWL…ERALKQLLDR (64 aa)).

The protein belongs to the SHANK family. As to quaternary structure, is part of a complex with DLG4/PSD-95 and DLGAP1/GKAP. Interacts with CTTN/cortactin SH3 domain, DLGAP1/GKAP and alpha-latrotoxin receptor 1. Interacts with DNM2, DBNL, GRID2, BAIAP2, SLC9A3, PLCB3 and CFTR. Interacts with ABI1 (via SH3 domain). Interacts (via proline-rich region) with PDE4D isoform 5 (via N-terminal region). Interacts with PDE4D isoform 33, isoform 4, isoform 7, isoform 8 and isoform 9 but not isoform 32 and isoform 6. Interacts weakly with PDE4D isoform 31. Interacts with ABI1. In terms of tissue distribution, expressed in epithelial cells (at protein level). All isoforms except isoform 7 are expressed predominantly in brain, with highest levels in olfactory bulb, cerebral cortex, cerebellum, central gray matter and hippocampus. Moderate levels of expression are seen in the caudate putamen, thalamic nuclei and brain stem. In cerebellum primarily expressed in Purkinje cells. Isoform 7 is not expressed in brain but expressed in liver, cholangiocytes and thymus. Isoform 7 is present in pancreas, colonic mucosa and thymocytes (at protein level).

The protein localises to the apical cell membrane. The protein resides in the cytoplasm. Its subcellular location is the synapse. It localises to the postsynaptic density. It is found in the cell projection. The protein localises to the growth cone. The protein resides in the dendritic spine. In terms of biological role, seems to be an adapter protein in the postsynaptic density (PSD) of excitatory synapses that interconnects receptors of the postsynaptic membrane including NMDA-type and metabotropic glutamate receptors, and the actin-based cytoskeleton. May play a role in the structural and functional organization of the dendritic spine and synaptic junction. This is SH3 and multiple ankyrin repeat domains protein 2 (Shank2) from Rattus norvegicus (Rat).